The chain runs to 242 residues: Hairy and enhancer of split-related protein HELT (242 aa).

The bHLH domain maps to 10-65; it reads RTPVSHKVIEKRRRDRINRCLNELGKTVPMALAKQSSGKLEKAEILEMTVQYLRAL. An N6-acetyllysine modification is found at K48. Positions 87–122 constitute an Orange domain; sequence FHYGYHECMKNLVHYLTTVERMETKDTKYARILAFL.

It belongs to the HEY family. In terms of assembly, self-associates. Interacts with HES5 and HEY2.

It is found in the nucleus. Its function is as follows. Transcriptional repressor which binds preferentially to the canonical E box sequence 5'-CACGCG-3'. This Homo sapiens (Human) protein is Hairy and enhancer of split-related protein HELT (HELT).